The chain runs to 451 residues: Chromosomal replication initiator protein DnaA (451 aa).

A domain I, interacts with DnaA modulators region spans residues 1 to 72 (MQSIEDIWQE…ANILQEITGR (72 aa)). Residues 72–108 (RLFDVRFIDGEQEENFEYTVIKPNPALDEDGVEIGKH) are domain II. The domain III, AAA+ region stretch occupies residues 109–325 (MLNPRYVFDT…GALIRVVAYS (217 aa)). Residues G153, G155, K156, and T157 each contribute to the ATP site. Residues 326–451 (SLVNKDITAG…KNLRKAQNMF (126 aa)) are domain IV, binds dsDNA.

The protein belongs to the DnaA family. Oligomerizes as a right-handed, spiral filament on DNA at oriC.

It localises to the cytoplasm. Its function is as follows. Plays an essential role in the initiation and regulation of chromosomal replication. ATP-DnaA binds to the origin of replication (oriC) to initiate formation of the DNA replication initiation complex once per cell cycle. Binds the DnaA box (a 9 base pair repeat at the origin) and separates the double-stranded (ds)DNA. Forms a right-handed helical filament on oriC DNA; dsDNA binds to the exterior of the filament while single-stranded (ss)DNA is stabiized in the filament's interior. The ATP-DnaA-oriC complex binds and stabilizes one strand of the AT-rich DNA unwinding element (DUE), permitting loading of DNA polymerase. After initiation quickly degrades to an ADP-DnaA complex that is not apt for DNA replication. Binds acidic phospholipids. The sequence is that of Chromosomal replication initiator protein DnaA from Listeria monocytogenes serotype 4b (strain CLIP80459).